The chain runs to 192 residues: 7-methyl-GTP pyrophosphatase (192 aa).

The active-site Proton acceptor is the aspartate 69.

The protein belongs to the Maf family. YceF subfamily. A divalent metal cation is required as a cofactor.

It is found in the cytoplasm. The enzyme catalyses N(7)-methyl-GTP + H2O = N(7)-methyl-GMP + diphosphate + H(+). Its function is as follows. Nucleoside triphosphate pyrophosphatase that hydrolyzes 7-methyl-GTP (m(7)GTP). May have a dual role in cell division arrest and in preventing the incorporation of modified nucleotides into cellular nucleic acids. This chain is 7-methyl-GTP pyrophosphatase, found in Pseudomonas fluorescens (strain ATCC BAA-477 / NRRL B-23932 / Pf-5).